The sequence spans 701 residues: Transcriptional regulator Kaiso (701 aa).

The region spanning 32 to 94 is the BTB domain; it reads CDVTVIVEDR…IYSSKIVRVR (63 aa). Disordered stretches follow at residues 128 to 158 and 181 to 311; these read GAGGKDGGTDAPSNPDHKAPEPQKSSDSPLP and SSDD…QNQH. A compositionally biased stretch (polar residues) spans 245–258; it reads TPSSQVQLTQNSLP. Positions 259–273 are enriched in low complexity; sequence TNQQSSKNTSSTTQK. The span at 278–311 shows a compositional bias: polar residues; sequence VNANISKNPTPAANGFLSPTAQKQGTPNAVQNQH. The tract at residues 470–609 is required for methylation dependent DNA-binding; the sequence is AKLDLDGLPN…QIRQYAYVNN (140 aa). 3 C2H2-type zinc fingers span residues 501–523, 529–551, and 557–580; these read YICIVCKRSYVCLTSLRRHFNVH, YPCRYCERVFPLAEYRTKHEIHH, and YQCLTCGSSFINYQVMASHIRSVH. The interval 519–701 is required for sequence specific DNA-binding; the sequence is HFNVHSWEKK…EFEFVIPESY (183 aa). The interval 644–664 is disordered; sequence DIDPDEPQQPASEGNHANSAT. Residues 652–664 are compositionally biased toward polar residues; that stretch reads QPASEGNHANSAT.

In terms of assembly, self associates. Interacts with tcf7l1-A, leading to repression of tcf7l1-A target genes. Interacts with ctnnd1, and this interaction may inhibit DNA-binding. Interacts with ncor1.

It is found in the nucleus. Functionally, transcriptional regulator with bimodal DNA-binding specificity. Binds to methylated CpG dinucleotides in the consensus sequence 5'-CGCG-3' and also binds to the non-methylated consensus sequence 5'-CTGCNA-3'. May recruit the N-CoR repressor complex to promote histone deacetylation and the formation of repressive chromatin structures in target gene promoters. Contributes to the repression of target genes of the Wnt signaling pathway and to the methylation-dependent repression of zygotic transcription prior to the mid-blastula transition (MBT). Also required for gastrulation movements. The protein is Transcriptional regulator Kaiso (zbtb33) of Xenopus laevis (African clawed frog).